The following is a 557-amino-acid chain: Proline--tRNA ligase (557 aa).

It belongs to the class-II aminoacyl-tRNA synthetase family. ProS type 1 subfamily. In terms of assembly, homodimer.

It is found in the cytoplasm. It carries out the reaction tRNA(Pro) + L-proline + ATP = L-prolyl-tRNA(Pro) + AMP + diphosphate. Functionally, catalyzes the attachment of proline to tRNA(Pro) in a two-step reaction: proline is first activated by ATP to form Pro-AMP and then transferred to the acceptor end of tRNA(Pro). As ProRS can inadvertently accommodate and process non-cognate amino acids such as alanine and cysteine, to avoid such errors it has two additional distinct editing activities against alanine. One activity is designated as 'pretransfer' editing and involves the tRNA(Pro)-independent hydrolysis of activated Ala-AMP. The other activity is designated 'posttransfer' editing and involves deacylation of mischarged Ala-tRNA(Pro). The misacylated Cys-tRNA(Pro) is not edited by ProRS. This Baumannia cicadellinicola subsp. Homalodisca coagulata protein is Proline--tRNA ligase.